A 194-amino-acid chain; its full sequence is MQGFFWKTWLVLAVCGTPASLAHRPLSYGEALELAVSVYNGKAGEASLYRLLEAVPQPEWDPSSEGSQQLNFTLKETACQVEEERSLEECGFQEDGVVLECTGYYFFGETPPVVVLSCVPVGGVEEEEEEEEEEQKAEAENDEEVEKEKEDEEKDQPKRVKRFKKFFKKVKKSVKKRLKKIFKKPMVIGVTFPF.

The N-terminal stretch at 1–22 is a signal peptide; it reads MQGFFWKTWLVLAVCGTPASLA. A propeptide spanning residues 23-160 is cleaved from the precursor; that stretch reads HRPLSYGEAL…DEEKDQPKRV (138 aa). 2 disulfide bridges follow: C79–C90 and C101–C118. Over residues 125–154 the composition is skewed to acidic residues; it reads EEEEEEEEEEQKAEAENDEEVEKEKEDEEK. The tract at residues 125–157 is disordered; that stretch reads EEEEEEEEEEQKAEAENDEEVEKEKEDEEKDQP.

This sequence belongs to the cathelicidin family. Expressed by the venom gland.

Its subcellular location is the secreted. The protein resides in the target cell membrane. Functionally, potent antimicrobial peptide against Gram-negative and Gram-positive bacteria. Adopts an amphipathic alpha helical conformation, that may allow to partition into the target membrane. Low hemolytic activities have been observed on mammalian cells. This Lachesis muta rhombeata (Bushmaster) protein is Lachesicidin.